A 265-amino-acid chain; its full sequence is tRNA pseudouridine synthase A (265 aa).

Asp-53 acts as the Nucleophile in catalysis. Residue Tyr-111 participates in substrate binding.

It belongs to the tRNA pseudouridine synthase TruA family. In terms of assembly, homodimer.

The catalysed reaction is uridine(38/39/40) in tRNA = pseudouridine(38/39/40) in tRNA. Formation of pseudouridine at positions 38, 39 and 40 in the anticodon stem and loop of transfer RNAs. This Acinetobacter baumannii (strain AB307-0294) protein is tRNA pseudouridine synthase A.